The sequence spans 115 residues: NAD(P)H-quinone oxidoreductase subunit M (115 aa).

This sequence belongs to the complex I NdhM subunit family. As to quaternary structure, NDH-1 can be composed of about 15 different subunits; different subcomplexes with different compositions have been identified which probably have different functions.

Its subcellular location is the cellular thylakoid membrane. The enzyme catalyses a plastoquinone + NADH + (n+1) H(+)(in) = a plastoquinol + NAD(+) + n H(+)(out). It catalyses the reaction a plastoquinone + NADPH + (n+1) H(+)(in) = a plastoquinol + NADP(+) + n H(+)(out). Its function is as follows. NDH-1 shuttles electrons from an unknown electron donor, via FMN and iron-sulfur (Fe-S) centers, to quinones in the respiratory and/or the photosynthetic chain. The immediate electron acceptor for the enzyme in this species is believed to be plastoquinone. Couples the redox reaction to proton translocation, and thus conserves the redox energy in a proton gradient. Cyanobacterial NDH-1 also plays a role in inorganic carbon-concentration. This Prochlorococcus marinus (strain NATL1A) protein is NAD(P)H-quinone oxidoreductase subunit M.